Consider the following 547-residue polypeptide: Glucose-6-phosphate isomerase (547 aa).

Glu-351 acts as the Proton donor in catalysis. Active-site residues include His-382 and Lys-510.

It belongs to the GPI family.

It is found in the cytoplasm. It carries out the reaction alpha-D-glucose 6-phosphate = beta-D-fructose 6-phosphate. It participates in carbohydrate biosynthesis; gluconeogenesis. The protein operates within carbohydrate degradation; glycolysis; D-glyceraldehyde 3-phosphate and glycerone phosphate from D-glucose: step 2/4. Catalyzes the reversible isomerization of glucose-6-phosphate to fructose-6-phosphate. The sequence is that of Glucose-6-phosphate isomerase from Saccharophagus degradans (strain 2-40 / ATCC 43961 / DSM 17024).